The chain runs to 390 residues: Chorismate synthase (390 aa).

Residues R48 and R54 each contribute to the NADP(+) site. Residues 125–127 (RSS), 238–239 (NA), G278, 293–297 (KPTSS), and R319 each bind FMN. The interval 360–390 (KVPGNIINPTNPVTTQPDVRRAEDPEPDENS) is disordered. Residues 366 to 376 (INPTNPVTTQP) show a composition bias toward polar residues.

This sequence belongs to the chorismate synthase family. Homotetramer. The cofactor is FMNH2.

It catalyses the reaction 5-O-(1-carboxyvinyl)-3-phosphoshikimate = chorismate + phosphate. It participates in metabolic intermediate biosynthesis; chorismate biosynthesis; chorismate from D-erythrose 4-phosphate and phosphoenolpyruvate: step 7/7. Its function is as follows. Catalyzes the anti-1,4-elimination of the C-3 phosphate and the C-6 proR hydrogen from 5-enolpyruvylshikimate-3-phosphate (EPSP) to yield chorismate, which is the branch point compound that serves as the starting substrate for the three terminal pathways of aromatic amino acid biosynthesis. This reaction introduces a second double bond into the aromatic ring system. This chain is Chorismate synthase, found in Nitrosomonas eutropha (strain DSM 101675 / C91 / Nm57).